Reading from the N-terminus, the 137-residue chain is Small ribosomal subunit protein uS12 (137 aa).

The interval 1 to 20 is disordered; it reads MPTTNQLVNRGRTSKVQKQN. Asp-102 carries the post-translational modification 3-methylthioaspartic acid.

The protein belongs to the universal ribosomal protein uS12 family. In terms of assembly, part of the 30S ribosomal subunit. Contacts proteins S8 and S17. May interact with IF1 in the 30S initiation complex.

Functionally, with S4 and S5 plays an important role in translational accuracy. In terms of biological role, interacts with and stabilizes bases of the 16S rRNA that are involved in tRNA selection in the A site and with the mRNA backbone. Located at the interface of the 30S and 50S subunits, it traverses the body of the 30S subunit contacting proteins on the other side and probably holding the rRNA structure together. The combined cluster of proteins S8, S12 and S17 appears to hold together the shoulder and platform of the 30S subunit. The sequence is that of Small ribosomal subunit protein uS12 from Mycoplasmopsis synoviae (strain 53) (Mycoplasma synoviae).